The primary structure comprises 103 residues: L-rhamnose-binding lectin ELEL-1 (103 aa).

The SUEL-type lectin domain maps to 13–102; that stretch reads VCEGSSLTIS…KYLELSYDCS (90 aa). 4 cysteine pairs are disulfide-bonded: Cys-14–Cys-45, Cys-23–Cys-101, Cys-56–Cys-88, and Cys-69–Cys-75.

As to quaternary structure, homodimer; disulfide-linked. Not glycosylated.

Its function is as follows. Rhamnose-binding lectin. Also binds alpha-D-melibiose, alpha-D-lactose, beta-D-lactose, methyl-alpha-D-galactopyranoside, methyl-beta-D--galactopyranoside and D-galactose but not D-arabinose, L-fucose, D-glucose, D-mannose, D-maltose, D-sucrose, N-acetyl-D-galactosamine, N-acetyl-D-glucosamine, N-acetyl-D-mannosamine-D-xylose or by glycoproteins orosomucoid, thyroglobulin, ovomucoid and porcine stomach mucin. Shows cation-independent hemagglutinating activity against rabbit and human erythrocytes. Agglutinates cells of Gram-positive bacterial species S.aureus but not those of Gram-negative E.coli. The polypeptide is L-rhamnose-binding lectin ELEL-1 (Echinometra lucunter (Rock-boring urchin)).